Reading from the N-terminus, the 443-residue chain is Probable glycine dehydrogenase (decarboxylating) subunit 1 (443 aa).

This sequence belongs to the GcvP family. N-terminal subunit subfamily. The glycine cleavage system is composed of four proteins: P, T, L and H. In this organism, the P 'protein' is a heterodimer of two subunits.

It carries out the reaction N(6)-[(R)-lipoyl]-L-lysyl-[glycine-cleavage complex H protein] + glycine + H(+) = N(6)-[(R)-S(8)-aminomethyldihydrolipoyl]-L-lysyl-[glycine-cleavage complex H protein] + CO2. Its function is as follows. The glycine cleavage system catalyzes the degradation of glycine. The P protein binds the alpha-amino group of glycine through its pyridoxal phosphate cofactor; CO(2) is released and the remaining methylamine moiety is then transferred to the lipoamide cofactor of the H protein. The sequence is that of Probable glycine dehydrogenase (decarboxylating) subunit 1 from Nitratidesulfovibrio vulgaris (strain DSM 19637 / Miyazaki F) (Desulfovibrio vulgaris).